Consider the following 352-residue polypeptide: UDP-N-acetylglucosamine--N-acetylmuramyl-(pentapeptide) pyrophosphoryl-undecaprenol N-acetylglucosamine transferase 2 (352 aa).

Residues 11 to 13, arginine 164, serine 194, and glutamine 289 contribute to the UDP-N-acetyl-alpha-D-glucosamine site; that span reads SAG.

This sequence belongs to the glycosyltransferase 28 family. MurG subfamily.

It localises to the cell membrane. It catalyses the reaction di-trans,octa-cis-undecaprenyl diphospho-N-acetyl-alpha-D-muramoyl-L-alanyl-D-glutamyl-meso-2,6-diaminopimeloyl-D-alanyl-D-alanine + UDP-N-acetyl-alpha-D-glucosamine = di-trans,octa-cis-undecaprenyl diphospho-[N-acetyl-alpha-D-glucosaminyl-(1-&gt;4)]-N-acetyl-alpha-D-muramoyl-L-alanyl-D-glutamyl-meso-2,6-diaminopimeloyl-D-alanyl-D-alanine + UDP + H(+). It functions in the pathway cell wall biogenesis; peptidoglycan biosynthesis. Its function is as follows. Cell wall formation. Catalyzes the transfer of a GlcNAc subunit on undecaprenyl-pyrophosphoryl-MurNAc-pentapeptide (lipid intermediate I) to form undecaprenyl-pyrophosphoryl-MurNAc-(pentapeptide)GlcNAc (lipid intermediate II). This Bacillus anthracis protein is UDP-N-acetylglucosamine--N-acetylmuramyl-(pentapeptide) pyrophosphoryl-undecaprenol N-acetylglucosamine transferase 2.